Here is a 149-residue protein sequence, read N- to C-terminus: Calmodulin (149 aa).

Alanine 2 carries the N-acetylalanine modification. 4 EF-hand domains span residues 8–43 (EQIA…VGQN), 44–79 (PTEA…KMKD), 81–116 (DSEE…LGEK), and 117–149 (LTDE…MMSK). Ca(2+) contacts are provided by aspartate 21, aspartate 23, aspartate 25, threonine 27, glutamate 32, aspartate 57, aspartate 59, asparagine 61, threonine 63, glutamate 68, aspartate 94, aspartate 96, asparagine 98, glutamate 105, aspartate 130, aspartate 132, aspartate 134, glutamine 136, and glutamate 141.

It belongs to the calmodulin family.

In terms of biological role, calmodulin mediates the control of a large number of enzymes, ion channels and other proteins by Ca(2+). Among the enzymes to be stimulated by the calmodulin-Ca(2+) complex are a number of protein kinases and phosphatases. The protein is Calmodulin (CMD1) of Achlya klebsiana.